The sequence spans 311 residues: Malate dehydrogenase (311 aa).

Residues 7-13 and Asp-34 contribute to the NAD(+) site; that span reads GAAGGIG. Residues Arg-81 and Arg-87 each coordinate substrate. Residues Asn-94 and 117-119 contribute to the NAD(+) site; that span reads ITN. The substrate site is built by Asn-119 and Arg-153. His-177 functions as the Proton acceptor in the catalytic mechanism. An NAD(+)-binding site is contributed by Met-227.

The protein belongs to the LDH/MDH superfamily. MDH type 1 family. Homodimer.

The catalysed reaction is (S)-malate + NAD(+) = oxaloacetate + NADH + H(+). Functionally, catalyzes the reversible oxidation of malate to oxaloacetate. The sequence is that of Malate dehydrogenase from Vibrio atlanticus (strain LGP32) (Vibrio splendidus (strain Mel32)).